The chain runs to 236 residues: MEKREELYRGKAKSVYQTDDADRLILLFRNDTSAFDGKRIEQLDRKGAVNNKFNAFIMQKLEAAGIPTQFDKLLSDTECLVKKLDMIPVECVVRNFAAGSLVRRLGVEEGIALTPPTFELFLKNDALGDPFINESHVQAFGWATPEQLAQMKTYSFKVNEVLNKLFDDAGLLLVDFKLEFGLFHGQIVLGDEFSPDGCRLWDKETRKKMDKDRFRQGLGDVIEAYEEVAKRLGVPL.

Belongs to the SAICAR synthetase family.

It carries out the reaction 5-amino-1-(5-phospho-D-ribosyl)imidazole-4-carboxylate + L-aspartate + ATP = (2S)-2-[5-amino-1-(5-phospho-beta-D-ribosyl)imidazole-4-carboxamido]succinate + ADP + phosphate + 2 H(+). It participates in purine metabolism; IMP biosynthesis via de novo pathway; 5-amino-1-(5-phospho-D-ribosyl)imidazole-4-carboxamide from 5-amino-1-(5-phospho-D-ribosyl)imidazole-4-carboxylate: step 1/2. The protein is Phosphoribosylaminoimidazole-succinocarboxamide synthase of Pseudomonas aeruginosa (strain LESB58).